We begin with the raw amino-acid sequence, 431 residues long: Phosphoribosylamine--glycine ligase (431 aa).

Residues 109–316 form the ATP-grasp domain; it reads KDFLARHGIP…LVDLLEAAID (208 aa). Residue 135 to 196 coordinates ATP; it reads VREKGTPIVV…EEFLDGEEAS (62 aa). Mg(2+)-binding residues include glutamate 286 and asparagine 288.

It belongs to the GARS family. Mg(2+) is required as a cofactor. It depends on Mn(2+) as a cofactor.

It carries out the reaction 5-phospho-beta-D-ribosylamine + glycine + ATP = N(1)-(5-phospho-beta-D-ribosyl)glycinamide + ADP + phosphate + H(+). It functions in the pathway purine metabolism; IMP biosynthesis via de novo pathway; N(1)-(5-phospho-D-ribosyl)glycinamide from 5-phospho-alpha-D-ribose 1-diphosphate: step 2/2. The chain is Phosphoribosylamine--glycine ligase from Xanthomonas axonopodis pv. citri (strain 306).